The chain runs to 1132 residues: Cytospin-A (1132 aa).

Positions 1 to 166 (MKKAGRPVGN…SKSDGQLSDK (166 aa)) are disordered. 2 stretches are compositionally biased toward low complexity: residues 73–109 (STHSTSCGTNTNNPDTKTKTTSGPSGKRTTSMTSKES) and 119–129 (SRNSSSKKQSS). Positions 150-159 (SESRMSKSKS) are enriched in basic and acidic residues. The stretch at 226–268 (DVESTLLLLQEQNQAIRGELNLLKNENRMLKDRLNALGFSLEQ) forms a coiled coil. The disordered stretch occupies residues 301–381 (ASSVEGSAPG…RKGSSGNTSE (81 aa)). Polar residues predominate over residues 333–343 (SEVYQAVTSSD). Over residues 348 to 377 (APSGCGSSSSSESEGGPPACRSSSRKGSSG) the composition is skewed to low complexity. 2 coiled-coil regions span residues 385-440 (ACLT…MDSL) and 478-798 (RYME…RGRV). 2 disordered regions span residues 869-895 (TSTTPTAPLPRTPLSPSPMKTPPAAAV) and 939-1016 (SRPA…RKDP). The segment covering 875–889 (APLPRTPLSPSPMKT) has biased composition (pro residues). Positions 946–961 (QRVSNMDTSKTITVSR) are enriched in polar residues. The segment covering 962–972 (RSSEEPKRDIS) has biased composition (basic and acidic residues). Positions 979–1000 (ASSLISMSSAAALSSSSSPTAS) are enriched in low complexity. Residues 1026-1131 (GSKRNALLRW…YVTSIYKYFE (106 aa)) enclose the Calponin-homology (CH) domain.

This sequence belongs to the cytospin-A family. In terms of assembly, may interact with both microtubules and actin cytoskeleton.

It is found in the cytoplasm. The protein resides in the cytoskeleton. Its subcellular location is the spindle. It localises to the cell junction. The protein localises to the gap junction. Its function is as follows. Involved in cytokinesis and spindle organization. May play a role in actin cytoskeleton organization and microtubule stabilization and hence required for proper cell adhesion and migration. The sequence is that of Cytospin-A (specc1la) from Danio rerio (Zebrafish).